The chain runs to 354 residues: DNA integrity scanning protein DisA (354 aa).

The DAC domain occupies 6 to 144 (DDELKKILKI…GDIKYVLRDS (139 aa)). Residues glycine 73, leucine 91, and 104–108 (TRHRT) contribute to the ATP site.

It belongs to the DisA family. As to quaternary structure, homooctamer. Mg(2+) serves as cofactor.

It carries out the reaction 2 ATP = 3',3'-c-di-AMP + 2 diphosphate. Its function is as follows. Participates in a DNA-damage check-point that is active prior to asymmetric division when DNA is damaged. DisA forms globular foci that rapidly scan along the chromosomes during sporulation, searching for lesions. When a lesion is present, DisA pauses at the lesion site. This triggers a cellular response that culminates in a temporary block in sporulation initiation. Functionally, also has diadenylate cyclase activity, catalyzing the condensation of 2 ATP molecules into cyclic di-AMP (c-di-AMP). c-di-AMP acts as a signaling molecule that couples DNA integrity with progression of sporulation. The rise in c-di-AMP level generated by DisA while scanning the chromosome, operates as a positive signal that advances sporulation; upon encountering a lesion, the DisA focus arrests at the damaged site and halts c-di-AMP synthesis. In Clostridium perfringens (strain 13 / Type A), this protein is DNA integrity scanning protein DisA.